The primary structure comprises 1186 residues: Syntaxin-binding protein 5-like (1186 aa).

Residue methionine 1 is modified to N-acetylmethionine. The interval alanine 15 to alanine 40 is disordered. Over residues serine 16–serine 26 the composition is skewed to low complexity. 10 WD repeats span residues threonine 74–glutamine 107, valine 114–phenylalanine 153, isoleucine 158–isoleucine 194, histidine 213–valine 247, isoleucine 253–proline 285, proline 307–threonine 349, isoleucine 357–leucine 391, threonine 413–lysine 490, glutamine 518–isoleucine 629, and threonine 643–asparagine 705. Threonine 568 bears the Phosphothreonine mark. Phosphoserine is present on residues serine 574, serine 589, and serine 593. Position 596 is a phosphothreonine (threonine 596). Serine 599 bears the Phosphoserine mark. Arginine 709 carries the omega-N-methylarginine modification. The span at threonine 748–arginine 769 shows a compositional bias: polar residues. Residues threonine 748–serine 771 form a disordered region. Phosphoserine occurs at positions 763, 765, 766, 771, 772, 793, 800, 812, 820, 822, and 823. WD repeat units follow at residues isoleucine 832–phenylalanine 889, threonine 898–leucine 969, isoleucine 974–asparagine 1018, and cysteine 1032–glutamine 1055. Position 1093 is a phosphothreonine (threonine 1093). One can recognise a v-SNARE coiled-coil homology domain in the interval serine 1121 to lysine 1181.

This sequence belongs to the WD repeat L(2)GL family. Interacts with STX1A and STX4. In terms of processing, phosphorylated, leading to STXBP5L increased turnover and subsequent de-repression of insulin secretion. Phosphorylated on serine residues in response to glucose or phorbol esters. Ubiquitinated by the E3 ligase SYVN1, leading to STXBP5L proteasomal degradation. As to expression, detected in kidney, hippocampus and lung carcinoma.

The protein resides in the cytoplasm. It localises to the cell membrane. It is found in the membrane. In terms of biological role, plays a role in vesicle trafficking and exocytosis inhibition. In pancreatic beta-cells, inhibits insulin secretion probably by interacting with and regulating STX1A and STX4, key t-SNARE proteins involved in the fusion of insulin granules to the plasma membrane. Also plays a role in neurotransmitter release by inhibiting basal acetylcholine release from axon terminals and by preventing synaptic fatigue upon repetitive stimulation. Promotes as well axonal outgrowth. This chain is Syntaxin-binding protein 5-like (STXBP5L), found in Homo sapiens (Human).